Reading from the N-terminus, the 668-residue chain is UvrABC system protein B (668 aa).

The Helicase ATP-binding domain maps to 27 to 413; sequence AGVQAGHRFQ…STQVVEQIIR (387 aa). Residue 40-47 participates in ATP binding; the sequence is GATGTGKT. A Beta-hairpin motif is present at residues 93-116; the sequence is YYDYYQPEAYIPVTDTYIEKSASI. The 167-residue stretch at 430–596 folds into the Helicase C-terminal domain; it reads QVDDLYGEIR…PIVKKTSNAI (167 aa). Positions 628–663 constitute a UVR domain; the sequence is PPLIQDLEAKMKAAAQELAFEEAARYRDQIKRLRDR.

It belongs to the UvrB family. Forms a heterotetramer with UvrA during the search for lesions. Interacts with UvrC in an incision complex.

Its subcellular location is the cytoplasm. Its function is as follows. The UvrABC repair system catalyzes the recognition and processing of DNA lesions. A damage recognition complex composed of 2 UvrA and 2 UvrB subunits scans DNA for abnormalities. Upon binding of the UvrA(2)B(2) complex to a putative damaged site, the DNA wraps around one UvrB monomer. DNA wrap is dependent on ATP binding by UvrB and probably causes local melting of the DNA helix, facilitating insertion of UvrB beta-hairpin between the DNA strands. Then UvrB probes one DNA strand for the presence of a lesion. If a lesion is found the UvrA subunits dissociate and the UvrB-DNA preincision complex is formed. This complex is subsequently bound by UvrC and the second UvrB is released. If no lesion is found, the DNA wraps around the other UvrB subunit that will check the other stand for damage. This Thermosynechococcus vestitus (strain NIES-2133 / IAM M-273 / BP-1) protein is UvrABC system protein B.